The primary structure comprises 164 residues: Phosphopantetheine adenylyltransferase (164 aa).

T14 provides a ligand contact to substrate. Residues T14–F15 and H22 each bind ATP. 3 residues coordinate substrate: K46, M78, and R92. ATP-binding positions include G93–R95, E103, and H128–T134.

This sequence belongs to the bacterial CoaD family. As to quaternary structure, homohexamer. The cofactor is Mg(2+).

Its subcellular location is the cytoplasm. It carries out the reaction (R)-4'-phosphopantetheine + ATP + H(+) = 3'-dephospho-CoA + diphosphate. It functions in the pathway cofactor biosynthesis; coenzyme A biosynthesis; CoA from (R)-pantothenate: step 4/5. Its function is as follows. Reversibly transfers an adenylyl group from ATP to 4'-phosphopantetheine, yielding dephospho-CoA (dPCoA) and pyrophosphate. The protein is Phosphopantetheine adenylyltransferase of Vibrio vulnificus (strain CMCP6).